A 206-amino-acid chain; its full sequence is Pyridoxine/pyridoxamine 5'-phosphate oxidase (206 aa).

FMN is bound by residues 53-58 (RMVLLK), 68-69 (YT), Lys75, and Gln97. Residue Lys58 coordinates substrate. Residues Tyr115, Arg119, and Ser123 each contribute to the substrate site. FMN is bound by residues 132 to 133 (QS) and Trp177. 183–185 (RLH) serves as a coordination point for substrate. Arg187 lines the FMN pocket.

It belongs to the pyridoxamine 5'-phosphate oxidase family. In terms of assembly, homodimer. FMN serves as cofactor.

It catalyses the reaction pyridoxamine 5'-phosphate + O2 + H2O = pyridoxal 5'-phosphate + H2O2 + NH4(+). The catalysed reaction is pyridoxine 5'-phosphate + O2 = pyridoxal 5'-phosphate + H2O2. The protein operates within cofactor metabolism; pyridoxal 5'-phosphate salvage; pyridoxal 5'-phosphate from pyridoxamine 5'-phosphate: step 1/1. Its pathway is cofactor metabolism; pyridoxal 5'-phosphate salvage; pyridoxal 5'-phosphate from pyridoxine 5'-phosphate: step 1/1. Functionally, catalyzes the oxidation of either pyridoxine 5'-phosphate (PNP) or pyridoxamine 5'-phosphate (PMP) into pyridoxal 5'-phosphate (PLP). The chain is Pyridoxine/pyridoxamine 5'-phosphate oxidase from Rhizobium meliloti (strain 1021) (Ensifer meliloti).